A 519-amino-acid polypeptide reads, in one-letter code: PTS system mannitol-specific EIICB component (519 aa).

The Cytoplasmic portion of the chain corresponds to 1–30 (MAQTETQEKKGLGRKVQAFGSFLSSMIMPN). A PTS EIIC type-2 domain is found at 19–351 (FGSFLSSMIM…MKFTKEPKQD (333 aa)). The helical transmembrane segment at 31 to 52 (IGAFIAWGFIAAIFIDNGWYPN) threads the bilayer. Over 53-56 (KELS) the chain is Extracellular. Residues 57-77 (QLAGPMITYLIPLLIAFSGGR) form a helical membrane-spanning segment. Residues 78–141 (LIHDLRGGIV…QGFEMLFNNF (64 aa)) lie on the Cytoplasmic side of the membrane. Residues 142–163 (SAGILAFIMTILGFKLLAPIMQ) traverse the membrane as a helical segment. The Extracellular segment spans residues 164-172 (FIMHILSVA). Residues 173–193 (VEFLVHLHLLPIVSIIVEPAK) traverse the membrane as a helical segment. The Cytoplasmic portion of the chain corresponds to 194-280 (ILFLNNAINH…VLMRPLLFIA (87 aa)). The helical transmembrane segment at 281–300 (VILGGMTGVATYQATGFGFK) threads the bilayer. At 301–320 (SPASPGSFIVYCLNAPKGEF) the chain is on the extracellular side. Residues 321–342 (LHMVLGVFLAALVSFVVAALIM) form a helical membrane-spanning segment. The Cytoplasmic segment spans residues 343 to 519 (KFTKEPKQDL…NNLKKDQDKA (177 aa)). The segment at 366-406 (KSSVSSKLTGATTGTGAAGVAANKANGEDQNEASSEDEEED) is disordered. The segment covering 367 to 387 (SSVSSKLTGATTGTGAAGVAA) has biased composition (low complexity). Over residues 394–406 (DQNEASSEDEEED) the composition is skewed to acidic residues. The region spanning 425 to 519 (DHVIFACDAG…NNLKKDQDKA (95 aa)) is the PTS EIIB type-2 domain. Catalysis depends on Cys-431, which acts as the Phosphocysteine intermediate; for EIIB activity. Cys-431 carries the phosphocysteine; by EIIA modification.

Homodimer.

It localises to the cell membrane. It carries out the reaction D-mannitol(out) + N(pros)-phospho-L-histidyl-[protein] = D-mannitol 1-phosphate(in) + L-histidyl-[protein]. The phosphoenolpyruvate-dependent sugar phosphotransferase system (sugar PTS), a major carbohydrate active transport system, catalyzes the phosphorylation of incoming sugar substrates concomitantly with their translocation across the cell membrane. The enzyme II CmtAB PTS system is involved in D-mannitol transport. This Staphylococcus haemolyticus (strain JCSC1435) protein is PTS system mannitol-specific EIICB component (mtlA).